The following is a 308-amino-acid chain: MRIVFAGTPEFAVPTLRALIASGHPPCAVYTQPDRPAGRGRKIAPSPVKQLAIEHGLPVFQPASLKGPEERERLVALEPDLMVVVAYGLILPTPVLTVPRFGCVNIHASLLPRWRGAAPIQRAILAGDRETGVTLMRIEPRLDAGPMLGKRSCSIGDDDTTASLHDRLAGLGAEMLIELLPGLAADRLTGEIQDESQVTYAEKIEKSEARLDWQKDATSLSRRVRAFNPWPVAETTLEGTVLRIWSAQVLDPAPDAPPGSIIACTKNLDVACGRGALRILEVQPPGKRRMSAKDFLNAHALAGKRLGT.

Residue 109 to 112 (SLLP) coordinates (6S)-5,6,7,8-tetrahydrofolate.

Belongs to the Fmt family.

The catalysed reaction is L-methionyl-tRNA(fMet) + (6R)-10-formyltetrahydrofolate = N-formyl-L-methionyl-tRNA(fMet) + (6S)-5,6,7,8-tetrahydrofolate + H(+). Its function is as follows. Attaches a formyl group to the free amino group of methionyl-tRNA(fMet). The formyl group appears to play a dual role in the initiator identity of N-formylmethionyl-tRNA by promoting its recognition by IF2 and preventing the misappropriation of this tRNA by the elongation apparatus. In Methylococcus capsulatus (strain ATCC 33009 / NCIMB 11132 / Bath), this protein is Methionyl-tRNA formyltransferase.